Here is a 365-residue protein sequence, read N- to C-terminus: Caffeic acid 3-O-methyltransferase (365 aa).

130 to 136 (MNQDKVL) contributes to the substrate binding site. Positions 162 to 180 (AFEYHGTDPRFNKVFNRGM) are substrate binding. 5 residues coordinate S-adenosyl-L-methionine: G208, D231, D251, M252, and K265. The Proton acceptor role is filled by H269.

The protein belongs to the class I-like SAM-binding methyltransferase superfamily. Cation-independent O-methyltransferase family. COMT subfamily. Homodimer.

The catalysed reaction is (E)-caffeate + S-adenosyl-L-methionine = (E)-ferulate + S-adenosyl-L-homocysteine + H(+). Its pathway is aromatic compound metabolism; phenylpropanoid biosynthesis. Its function is as follows. Catalyzes the conversion of caffeic acid to ferulic acid and of 5-hydroxyferulic acid to sinapic acid. The resulting products may subsequently be converted to the corresponding alcohols that are incorporated into lignins. The polypeptide is Caffeic acid 3-O-methyltransferase (COMT1) (Prunus dulcis (Almond)).